Consider the following 1265-residue polypeptide: Methionine synthase (1265 aa).

The region spanning 19 to 338 (RDEINAILQK…DHIREIAEAV (320 aa)) is the Hcy-binding domain. Positions 260, 323, and 324 each coordinate Zn(2+). Residues 371–632 (FVNIGERCNV…IHKELLQLCE (262 aa)) enclose the Pterin-binding domain. Residues 382–384 (GSR), Asp449, Asn470, Asp537, Asn579, Arg585, and Arg591 contribute to the (6S)-5,6,7,8-tetrahydrofolate site. A B12-binding N-terminal domain is found at 662-759 (QTDEWRNGPV…FMEKEREETR (98 aa)). Methylcob(III)alamin-binding positions include Glu709, 782-786 (GDVHD), His785, Ser830, Thr834, and Ala886. The 136-residue stretch at 772–907 (QGTIVLATVK…DENLKDEYFE (136 aa)) folds into the B12-binding domain. In terms of domain architecture, AdoMet activation spans 923 to 1265 (SLKERRYLPL…LGPILGYDTD (343 aa)). S-adenosyl-L-methionine is bound by residues Asp974, Arg1172, and 1227 to 1228 (YF). Phosphothreonine is present on Thr1264.

The protein belongs to the vitamin-B12 dependent methionine synthase family. As to quaternary structure, monomer. Dimer. Forms a multiprotein complex with MMACHC, MMADHC and MTRR. Methylcob(III)alamin serves as cofactor. Zn(2+) is required as a cofactor. In terms of tissue distribution, widely expressed. Expressed at the highest levels in pancreas, heart, brain, skeletal muscle and placenta. Expressed at lower levels in lung, liver and kidney.

The protein localises to the cytoplasm. The catalysed reaction is (6S)-5-methyl-5,6,7,8-tetrahydrofolate + L-homocysteine = (6S)-5,6,7,8-tetrahydrofolate + L-methionine. It functions in the pathway amino-acid biosynthesis; L-methionine biosynthesis via de novo pathway; L-methionine from L-homocysteine (MetH route): step 1/1. In terms of biological role, catalyzes the transfer of a methyl group from methylcob(III)alamin (MeCbl) to homocysteine, yielding enzyme-bound cob(I)alamin and methionine in the cytosol. MeCbl is an active form of cobalamin (vitamin B12) used as a cofactor for methionine biosynthesis. Cob(I)alamin form is regenerated to MeCbl by a transfer of a methyl group from 5-methyltetrahydrofolate. The processing of cobalamin in the cytosol occurs in a multiprotein complex composed of at least MMACHC, MMADHC, MTRR (methionine synthase reductase) and MTR which may contribute to shuttle safely and efficiently cobalamin towards MTR in order to produce methionine. This Homo sapiens (Human) protein is Methionine synthase.